The chain runs to 435 residues: Diaminobutyrate--2-oxoglutarate transaminase (435 aa).

K266 is subject to N6-(pyridoxal phosphate)lysine.

It belongs to the class-III pyridoxal-phosphate-dependent aminotransferase family. It depends on pyridoxal 5'-phosphate as a cofactor.

It carries out the reaction L-2,4-diaminobutanoate + 2-oxoglutarate = L-aspartate 4-semialdehyde + L-glutamate. Its pathway is amine and polyamine biosynthesis; ectoine biosynthesis; L-ectoine from L-aspartate 4-semialdehyde: step 1/3. Its function is as follows. Catalyzes reversively the conversion of L-aspartate beta-semialdehyde (ASA) to L-2,4-diaminobutyrate (DABA) by transamination with L-glutamate. This is Diaminobutyrate--2-oxoglutarate transaminase (ectB) from Bordetella bronchiseptica (strain ATCC BAA-588 / NCTC 13252 / RB50) (Alcaligenes bronchisepticus).